Here is a 757-residue protein sequence, read N- to C-terminus: MSLLFSRCNSIVTVKKDKRHMAEVNASPLKHFVTAKKKINGIFEQLGAYIQESASFLEDTHRNTELDPVTTEEQVLDVKGYLSKVRGISEVLARRHMKVAFFGRTSNGKSTVINAMLWDKVLPSGIGHTTNCFLRVGGTDGHEAFLLTEGSEEKKSVKTVNQLAHALHQDEQLHAGSMVSVMWPNSKCPLLKDDLVLMDSPGIDVTTELDSWIDKFCLDADVFVLVANSESTLMQTEKQFFHKVSERLSRPNIFILNNRWDASASEPEYMEEVRRQHMERCTSFLVDELGVVDRAQAGDRIFFVSAKEVLSARVQKAQGMPEGGGALAEGFQVRMFEFQNFERQFEECISQSAVKTKFEQHTVRAKQIAEAVRLIMDSLHIAAQEQRVYCLEMREERQDRLRFIDKQLELLAQDYKLRIKQITEEVERQVSTAMAEEIRRLSVLVDEYQMDFHPSPVVLKVYKNELHRHIEEGLGRNLSDRCSTAIASSLQTMQQDMIDGLKPLLPVSMRNQIDMLVPRQCFSLSYDLNCDKLCADFQEDIEFHFSLGWTMLVNRFLGPKNSRRALLGYSDQVQRPLPLTPANPSMPPLPQSSLTQEELMVSMVTGLASLTSRTSMGILVVGGVVWKAVGWRLIALSFGLYGLLYVYERLTWTTKAKERAFKRQFVEYASEKLQLIISYTGSNCSHQVQQELSGTFAHLCQQVDITRDNLEQEIAAMNKKVEALDSLQSRAKLLRNKAGWLDSELNMFTHQYLQPSR.

Topologically, residues 1-604 (MSLLFSRCNS…TQEELMVSMV (604 aa)) are cytoplasmic. Residues 30–94 (KHFVTAKKKI…VRGISEVLAR (65 aa)) form a part of a helix bundle domain, formed by helices from N-terminal and C-terminal regions region. In terms of domain architecture, Dynamin-type G spans 93 to 342 (ARRHMKVAFF…VRMFEFQNFE (250 aa)). Positions 103 to 110 (GRTSNGKS) are G1 motif. GTP is bound at residue 106-111 (SNGKST). Position 111 is a phosphothreonine; by PINK1 (threonine 111). Positions 129–130 (TT) are G2 motif. Residues 199-202 (DSPG) form a G3 motif region. Position 258–261 (258–261 (NRWD)) interacts with GTP. Residues 258 to 261 (NRWD) form a G4 motif region. Position 288 (glutamate 288) is a region of interest, G5 motif. Residues serine 305 and lysine 307 each coordinate GTP. A part of a helix bundle domain, formed by helices from N-terminal and C-terminal regions region spans residues 359–385 (EQHTVRAKQIAEAVRLIMDSLHIAAQE). A coiled-coil region spans residues 406-434 (KQLELLAQDYKLRIKQITEEVERQVSTAM). Serine 442 carries the post-translational modification Phosphoserine. Residues 605–625 (TGLASLTSRTSMGILVVGGVV) traverse the membrane as a helical segment. A topological domain (mitochondrial intermembrane) is located at residue tryptophan 626. Residues 627–647 (KAVGWRLIALSFGLYGLLYVY) traverse the membrane as a helical segment. The Cytoplasmic portion of the chain corresponds to 648 to 757 (ERLTWTTKAK…FTHQYLQPSR (110 aa)). Positions 696–738 (FAHLCQQVDITRDNLEQEIAAMNKKVEALDSLQSRAKLLRNKA) form a coiled coil. The segment at 722–753 (EALDSLQSRAKLLRNKAGWLDSELNMFTHQYL) is part of a helix bundle domain, formed by helices from N-terminal and C-terminal regions.

It belongs to the TRAFAC class dynamin-like GTPase superfamily. Dynamin/Fzo/YdjA family. Mitofusin subfamily. Forms homomultimers and heteromultimers with MFN1. Oligomerization is essential for mitochondrion fusion. Interacts with VAT1. Interacts with STOML2; may form heterooligomers. Interacts (phosphorylated) with PRKN. Interacts with EIF2AK3. Interacts with THG1L; THG1L probably functions as a guanyl-nucleotide exchange factor/GEF, activating MFN2. In terms of processing, phosphorylated by PINK1. Post-translationally, ubiquitinated by non-degradative ubiquitin by PRKN, promoting mitochondrial fusion; deubiquitination by USP30 inhibits mitochondrial fusion. Ubiquitinated by HUWE1 when dietary stearate (C18:0) levels are low; ubiquitination inhibits mitochondrial fusion. As to expression, ubiquitous. Expression is markedly reduced in ApoE-knockout mouse atherosclerotic arteries.

It localises to the mitochondrion outer membrane. It carries out the reaction GTP + H2O = GDP + phosphate + H(+). Functionally, mitochondrial outer membrane GTPase that mediates mitochondrial clustering and fusion. Mitochondria are highly dynamic organelles, and their morphology is determined by the equilibrium between mitochondrial fusion and fission events. Overexpression induces the formation of mitochondrial networks. Membrane clustering requires GTPase activity and may involve a major rearrangement of the coiled coil domains. Plays a central role in mitochondrial metabolism and may be associated with obesity and/or apoptosis processes. Plays an important role in the regulation of vascular smooth muscle cell proliferation. Involved in the clearance of damaged mitochondria via selective autophagy (mitophagy). Is required for PRKN recruitment to dysfunctional mitochondria. Involved in the control of unfolded protein response (UPR) upon ER stress including activation of apoptosis and autophagy during ER stress. Acts as an upstream regulator of EIF2AK3 and suppresses EIF2AK3 activation under basal conditions. The protein is Mitofusin-2 (Mfn2) of Mus musculus (Mouse).